The sequence spans 517 residues: Ribonuclease Y (517 aa).

Residues 1–21 (MIEVLIGLGAGVVGVGAGYLY) traverse the membrane as a helical segment. The KH domain maps to 207-273 (LINVVNIKND…TRVIELLVED (67 aa)). One can recognise an HD domain in the interval 333–426 (ALAHSLEVAH…VCAADALSAA (94 aa)).

Belongs to the RNase Y family.

It localises to the cell membrane. In terms of biological role, endoribonuclease that initiates mRNA decay. The sequence is that of Ribonuclease Y from Campylobacter concisus (strain 13826).